Consider the following 215-residue polypeptide: MLQVYLVRHGETQWNAERRIQGQSDSPLTAKGEQQAMQVATRAKELGITHIISSDLGRTRRTAEIIAQACGCDIIFDSRLRELNMGVLETRNIDSLTEEEENWRRQLVNGTVDGRIPEGESMQELSDRVNAALESCRDLPQGSRPLLVSHGIALGCLVSTILGLPAWAERRLRLRNCSISRVDYQESLWLASGWVVETAGDISHLDAPALDELQR.

Residues 8 to 15 (RHGETQWN), 21 to 22 (QG), Arg-58, Arg-60, 82 to 85 (ELNM), 104 to 105 (RR), and 151 to 152 (GI) each bind substrate. The active-site Tele-phosphohistidine intermediate is His-9. Glu-82 serves as the catalytic Proton donor/acceptor.

This sequence belongs to the phosphoglycerate mutase family. GpmB subfamily.

The catalysed reaction is (2R)-2-phosphoglycerate = (2R)-3-phosphoglycerate. Its pathway is carbohydrate degradation; glycolysis; pyruvate from D-glyceraldehyde 3-phosphate: step 3/5. The protein is Probable phosphoglycerate mutase GpmB of Escherichia coli O1:K1 / APEC.